Here is a 210-residue protein sequence, read N- to C-terminus: Glycerol-3-phosphate acyltransferase (210 aa).

Helical transmembrane passes span 1–21, 53–73, 87–107, 122–142, and 147–167; these read MLLS…FPAG, GPAL…VVAA, IAWL…LPVW, VLLA…LLLL, and IVSL…LILP.

This sequence belongs to the PlsY family. Probably interacts with PlsX.

It is found in the cell inner membrane. The catalysed reaction is an acyl phosphate + sn-glycerol 3-phosphate = a 1-acyl-sn-glycero-3-phosphate + phosphate. The protein operates within lipid metabolism; phospholipid metabolism. Functionally, catalyzes the transfer of an acyl group from acyl-phosphate (acyl-PO(4)) to glycerol-3-phosphate (G3P) to form lysophosphatidic acid (LPA). This enzyme utilizes acyl-phosphate as fatty acyl donor, but not acyl-CoA or acyl-ACP. The polypeptide is Glycerol-3-phosphate acyltransferase (Synechococcus elongatus (strain ATCC 33912 / PCC 7942 / FACHB-805) (Anacystis nidulans R2)).